Consider the following 400-residue polypeptide: Inositol polyphosphate 1-phosphatase (400 aa).

Asp54 lines the Li(+) pocket. Residue Glu79 coordinates Mg(2+). Glu80 contacts Li(+). Residues Asp153 and Ile155 each contribute to the Mg(2+) site. Positions 156, 157, and 158 each coordinate 1D-myo-inositol 1,4-bisphosphate. Over residues 238–257 (STRSNSEAQSQGTQNPSSEG) the composition is skewed to polar residues. The tract at residues 238–258 (STRSNSEAQSQGTQNPSSEGS) is disordered. 1D-myo-inositol 1,4-bisphosphate is bound by residues Ser268, Lys270, Gly290, Ala291, Lys294, and Thr312. A Mg(2+)-binding site is contributed by Asp317. Ser318 carries the phosphoserine modification.

It belongs to the inositol monophosphatase superfamily. As to quaternary structure, monomer. The cofactor is Mg(2+).

It carries out the reaction 1D-myo-inositol 1,4-bisphosphate + H2O = 1D-myo-inositol 4-phosphate + phosphate. It catalyses the reaction 1D-myo-inositol 1,3,4-trisphosphate + H2O = 1D-myo-inositol 3,4-bisphosphate + phosphate. It functions in the pathway signal transduction; phosphatidylinositol signaling pathway. With respect to regulation, inhibited by Li(+). Mg(2+)-dependent phosphatase that catalyzes the hydrolysis of the 1-position phosphate from inositol 1,4-bisphosphate and inositol 1,3,4-trisphosphate and participates in inositol phosphate metabolism. In Bos taurus (Bovine), this protein is Inositol polyphosphate 1-phosphatase.